Reading from the N-terminus, the 227-residue chain is Phosphoribosylformylglycinamidine synthase subunit PurQ (227 aa).

Residues 3 to 225 (FAVIVFPGSN…LKQWRETYVV (223 aa)) enclose the Glutamine amidotransferase type-1 domain. Cys-86 (nucleophile) is an active-site residue. Catalysis depends on residues His-194 and Glu-196.

As to quaternary structure, part of the FGAM synthase complex composed of 1 PurL, 1 PurQ and 2 PurS subunits.

The protein resides in the cytoplasm. It carries out the reaction N(2)-formyl-N(1)-(5-phospho-beta-D-ribosyl)glycinamide + L-glutamine + ATP + H2O = 2-formamido-N(1)-(5-O-phospho-beta-D-ribosyl)acetamidine + L-glutamate + ADP + phosphate + H(+). The catalysed reaction is L-glutamine + H2O = L-glutamate + NH4(+). Its pathway is purine metabolism; IMP biosynthesis via de novo pathway; 5-amino-1-(5-phospho-D-ribosyl)imidazole from N(2)-formyl-N(1)-(5-phospho-D-ribosyl)glycinamide: step 1/2. In terms of biological role, part of the phosphoribosylformylglycinamidine synthase complex involved in the purines biosynthetic pathway. Catalyzes the ATP-dependent conversion of formylglycinamide ribonucleotide (FGAR) and glutamine to yield formylglycinamidine ribonucleotide (FGAM) and glutamate. The FGAM synthase complex is composed of three subunits. PurQ produces an ammonia molecule by converting glutamine to glutamate. PurL transfers the ammonia molecule to FGAR to form FGAM in an ATP-dependent manner. PurS interacts with PurQ and PurL and is thought to assist in the transfer of the ammonia molecule from PurQ to PurL. The polypeptide is Phosphoribosylformylglycinamidine synthase subunit PurQ (Bacillus thuringiensis (strain Al Hakam)).